We begin with the raw amino-acid sequence, 686 residues long: Methionine--tRNA ligase (686 aa).

Residues 15 to 25 carry the 'HIGH' region motif; it reads PYANGSIHLGH. Zn(2+) is bound by residues cysteine 146, cysteine 149, cysteine 159, and cysteine 162. A 'KMSKS' region motif is present at residues 332–336; the sequence is KMSKS. An ATP-binding site is contributed by lysine 335. Residues 585-686 enclose the tRNA-binding domain; that stretch reads AFAAVDMRIA…EGAQPGMRVM (102 aa).

Belongs to the class-I aminoacyl-tRNA synthetase family. MetG type 1 subfamily. In terms of assembly, homodimer. It depends on Zn(2+) as a cofactor.

Its subcellular location is the cytoplasm. The enzyme catalyses tRNA(Met) + L-methionine + ATP = L-methionyl-tRNA(Met) + AMP + diphosphate. In terms of biological role, is required not only for elongation of protein synthesis but also for the initiation of all mRNA translation through initiator tRNA(fMet) aminoacylation. This is Methionine--tRNA ligase from Vibrio campbellii (strain ATCC BAA-1116).